A 969-amino-acid chain; its full sequence is MAADSDPESEVFEITDFTTASEWERFISRVEEVLNDWKLIGSRVGKPLEKGEYTSGTWEESSQEISFADFKFSITHHYLKQESAENDGRDELEEDAYPLAMQDLLCINNDFPPRAHCLVRWFGVREFVVISPGANCEAIISESKCSLLLSSVSIALANTGCQVPLFVQIQQKHRKMFSGECQGPGVRSDFEMVHLRRVPSQYNHLSGLLDIFKNKIGCPLTPLPPINISIRFTYVLQDWQQCSWPQQPPDFDALLAGEVGGVEFGKLPFGACEDPISELHLAATWPSLTEGIVVDNDVYSDLDPLQAPHWSVRVRTAENPQCLLGEFLTEFFKICCRKETTEEILGRSTAEEEGKENSDITQALSKLTEPSTAVPIHKLSVSSMVHSARKRIRRHRRVPESPLNNDVLNSILLYLFPDAALDKADVSEVRPPQQSPDRQSEDYHLYNQLKSCPSDSLTHRLALCICMVNFHHGGVRAVAHLWQEFVLEMRYRWENNCLIYGLASGPPDLRCCLLHQKLQMLNCCIERKKARDDGKKSSSSDGARDRSRGAPEGAGPEGAGPAEAAGKSWDSWSDSEDEFFECVSDTEEMKEDKEEAENRSRSKPEGRLQPHGTHTLLNTQEPLYIPITQEPAPMTEDLLEEQSEVLAKLGTSAEGAHLRARMQSACLLSDMESFKAANPGCTLLDFVRWYSPRDYVEEQVTDADGRVEVRGELSARMKIPGNMWVEAWETARATPARRQKRLFDDTKEAEKVLHYLALQKPSELTRHLLPCVLHAALLKIKEEESAEDLPSVRSSLQQISSSASKILRHPNPEFKKLEDVISQLMAVEAVIARARSLKAKFGVCGGEREREEDGDELERFVSSLLEEPEVCVSGAGRGPAGNVIHKLFVSSQRAALLAPMEEETLRSGGSDDRKAFPDFPPPAGREILLRTCVPRPAPYSKALPQRLFCVLMRDEFRLAGAFSSDTSFF.

Residues 532–549 show a composition bias toward basic and acidic residues; sequence DDGKKSSSSDGARDRSRG. The segment at 532–613 is disordered; the sequence is DDGKKSSSSD…PEGRLQPHGT (82 aa). The span at 550–572 shows a compositional bias: low complexity; the sequence is APEGAGPEGAGPAEAAGKSWDSW. The segment covering 573 to 589 has biased composition (acidic residues); the sequence is SDSEDEFFECVSDTEEM. A compositionally biased stretch (basic and acidic residues) spans 590–608; sequence KEDKEEAENRSRSKPEGRL.

It belongs to the Rab3-GAP catalytic subunit family. The Rab3 GTPase-activating complex is a heterodimer composed of rab3gap1 and rab3gap2. The Rab3 GTPase-activating complex interacts with DMXL2. Interacts with LMAN1.

It is found in the cytoplasm. Its subcellular location is the endoplasmic reticulum. The protein localises to the golgi apparatus. The protein resides in the cis-Golgi network. Catalytic subunit of the Rab3 GTPase-activating (Rab3GAP) complex composed of rab3gap1 and rab3gap2, which has GTPase-activating protein (GAP) activity towards various Rab3 subfamily members (RAB3A, RAB3B, RAB3C and RAB3D), RAB5A and RAB43, and guanine nucleotide exchange factor (GEF) activity towards RAB18. As part of the Rab3GAP complex, acts as a GAP for Rab3 proteins by converting active RAB3-GTP to the inactive form RAB3-GDP. Rab3 proteins are involved in regulated exocytosis of neurotransmitters and hormones. The Rab3GAP complex, acts as a GEF for RAB18 by promoting the conversion of inactive RAB18-GDP to the active form RAB18-GTP. Recruits and stabilizes RAB18 at the cis-Golgi membrane where RAB18 is most likely activated. Also involved in RAB18 recruitment at the endoplasmic reticulum (ER) membrane where it maintains proper ER structure. Required for normal eye and brain development. May participate in neurodevelopmental processes such as proliferation, migration and differentiation before synapse formation, and non-synaptic vesicular release of neurotransmitters. In Danio rerio (Zebrafish), this protein is Rab3 GTPase-activating protein catalytic subunit (rab3gap1).